The primary structure comprises 249 residues: Putative S-adenosyl-L-methionine-dependent methyltransferase Mkms_0592 (249 aa).

S-adenosyl-L-methionine is bound by residues D111 and 141-142 (DL).

It belongs to the UPF0677 family.

Exhibits S-adenosyl-L-methionine-dependent methyltransferase activity. In Mycobacterium sp. (strain KMS), this protein is Putative S-adenosyl-L-methionine-dependent methyltransferase Mkms_0592.